The chain runs to 333 residues: Biotin synthase (333 aa).

Positions 47–276 (YYGKKVKLNM…TKEIRISGGR (230 aa)) constitute a Radical SAM core domain. Residues cysteine 65, cysteine 69, and cysteine 72 each coordinate [4Fe-4S] cluster. [2Fe-2S] cluster is bound by residues cysteine 109, cysteine 141, cysteine 201, and arginine 271.

It belongs to the radical SAM superfamily. Biotin synthase family. As to quaternary structure, homodimer. Requires [4Fe-4S] cluster as cofactor. [2Fe-2S] cluster serves as cofactor.

The catalysed reaction is (4R,5S)-dethiobiotin + (sulfur carrier)-SH + 2 reduced [2Fe-2S]-[ferredoxin] + 2 S-adenosyl-L-methionine = (sulfur carrier)-H + biotin + 2 5'-deoxyadenosine + 2 L-methionine + 2 oxidized [2Fe-2S]-[ferredoxin]. It functions in the pathway cofactor biosynthesis; biotin biosynthesis; biotin from 7,8-diaminononanoate: step 2/2. Functionally, catalyzes the conversion of dethiobiotin (DTB) to biotin by the insertion of a sulfur atom into dethiobiotin via a radical-based mechanism. This Bacillus licheniformis (strain ATCC 14580 / DSM 13 / JCM 2505 / CCUG 7422 / NBRC 12200 / NCIMB 9375 / NCTC 10341 / NRRL NRS-1264 / Gibson 46) protein is Biotin synthase.